A 110-amino-acid chain; its full sequence is Iron-sulfur cluster assembly protein CyaY (110 aa).

Belongs to the frataxin family.

Functionally, involved in iron-sulfur (Fe-S) cluster assembly. May act as a regulator of Fe-S biogenesis. The chain is Iron-sulfur cluster assembly protein CyaY from Pseudomonas syringae pv. syringae (strain B728a).